Reading from the N-terminus, the 444-residue chain is Nuclear distribution protein nudF (444 aa).

One can recognise a LisH domain in the interval 9 to 41; it reads QAEALHKAMLAYLSVINAPQTAETLREELHFDE. Residues 60–88 are a coiled coil; the sequence is TGIARLQRRINDLEAEVRSLQAELEASPS. Residues 83-107 form a disordered region; the sequence is LEASPSAARAKNQDPTNWLPKPSST. WD repeat units follow at residues 112–153, 155–195, 199–239, 243–282, 285–345, 347–386, and 391–437; these read SHRD…RTLK, HIRG…ANIR, GHDH…CVKV, ATESWIRDVSPSFDGKWLVSGGRDQAITVWEVSSAEPKAA, GHEN…IKTL, GHDNWVRGLVFHPGGKYLFSVSDDKTIRCWDLSQEGRLVK, and AHEH…GCAD.

This sequence belongs to the WD repeat LIS1/nudF family. Interacts with dynein. Self-associates. Interacts with bnfA, nudC and nudE.

Its subcellular location is the cytoplasm. It is found in the cytoskeleton. It localises to the spindle pole. Functionally, positively regulates the activity of the minus-end directed microtubule motor protein dynein. May enhance dynein-mediated microtubule sliding by targeting dynein to the microtubule plus end. Required for nuclear migration during vegetative growth as well as development. Required for retrograde early endosome (EE) transport from the hyphal tip. Required for localization of dynein to the mitotic spindle poles. Recruits additional proteins to the dynein complex at SPBs. The sequence is that of Nuclear distribution protein nudF from Emericella nidulans (strain FGSC A4 / ATCC 38163 / CBS 112.46 / NRRL 194 / M139) (Aspergillus nidulans).